Here is a 237-residue protein sequence, read N- to C-terminus: Proteasome subunit beta (237 aa).

Residues 1 to 27 are disordered; the sequence is MSKFPDLPGMKNLDANPYEPELASFDD. The propeptide at 1 to 42 is removed in mature form; by autocatalysis; sequence MSKFPDLPGMKNLDANPYEPELASFDDMDADAGDGDAVAKTG. Threonine 43 (nucleophile) is an active-site residue.

This sequence belongs to the peptidase T1B family. In terms of assembly, the 20S proteasome core is composed of 14 alpha and 14 beta subunits that assemble into four stacked heptameric rings, resulting in a barrel-shaped structure. The two inner rings, each composed of seven catalytic beta subunits, are sandwiched by two outer rings, each composed of seven alpha subunits. The catalytic chamber with the active sites is on the inside of the barrel. Has a gated structure, the ends of the cylinder being occluded by the N-termini of the alpha-subunits. Is capped at one or both ends by the proteasome regulatory ATPase, PAN.

The protein localises to the cytoplasm. The catalysed reaction is Cleavage of peptide bonds with very broad specificity.. With respect to regulation, the formation of the proteasomal ATPase PAN-20S proteasome complex, via the docking of the C-termini of PAN into the intersubunit pockets in the alpha-rings, triggers opening of the gate for substrate entry. Interconversion between the open-gate and close-gate conformations leads to a dynamic regulation of the 20S proteasome proteolysis activity. Its function is as follows. Component of the proteasome core, a large protease complex with broad specificity involved in protein degradation. This is Proteasome subunit beta from Halomicrobium mukohataei (strain ATCC 700874 / DSM 12286 / JCM 9738 / NCIMB 13541) (Haloarcula mukohataei).